The chain runs to 549 residues: Lipase 1 (549 aa).

An N-terminal signal peptide occupies residues 1–15 (MELALALSLIASVAA). The cysteines at positions 75 and 112 are disulfide-linked. Serine 224 (acyl-ester intermediate) is an active-site residue. A disulfide bond links cysteine 283 and cysteine 292. Asparagine 329 carries an N-linked (GlcNAc...) asparagine glycan. Glutamate 356 functions as the Charge relay system in the catalytic mechanism. N-linked (GlcNAc...) asparagine glycosylation is present at asparagine 366. Catalysis depends on histidine 464, which acts as the Charge relay system.

The protein belongs to the type-B carboxylesterase/lipase family.

The catalysed reaction is a triacylglycerol + H2O = a diacylglycerol + a fatty acid + H(+). This Diutina rugosa (Yeast) protein is Lipase 1 (LIP1).